The sequence spans 691 residues: MARAFPLERVRNIGIAAHIDAGKTTTTERILFYSGVVHKIGEVHDGAAVTDWMAQERERGITITAAAISTSWNDHRINIIDTPGHVDFTIEVERSMRVLDGVIAVFCAVGGVQPQSETVWRQADRYSVPRMVFVNKMDRTGADFLKVHGQIKDRLKANAAPIQLPIGAEGDLSGIIDLVENKAHIYKDDLGQNIEVTDVPDDMKDQVAEWRTYLMEAVAETDEALIEKFLETGELSVEELKAGIRKGVLKHGLVPVLCGSAFKNKGVQLVLDAVVDYLPAPIDVPPIQGVLPNGEEAVRPSDDKAPFSALAFKVMADPYGKLTFVRMYSGVLAKGSYVLNSTKDSKERISRLVVLKADDREEVDELRAGDLGAVLGLKATTTGDTLCSAEDPIVLETLFVPEPVISVAVEPKTKGDMEKLSKALVALAEEDPTFRVNTDQETGQTVIAGMGELHLEILVDRMLREFKVEANIGAPQVSYRETIRASSRGEGKFSRQTGGKGQYGHVVIEMEPGEPESGFEFINKIVGGVVPKEYIKPSEMGMKETCESGVIAGYPLIDVKVTMIDGSYHDVDSSEMAFKIAGSMAFKDAVKKCNPVLLEPMMKVEVEVPEDFLGSIIGDLSSRRGQVEGQAIDDGTSKVSAKVPLAEMFGYATELRSMTQGRGIFSMEFSHYEDVPRNVAEAIISKNQGNS.

In terms of domain architecture, tr-type G spans 8–282 (ERVRNIGIAA…AVVDYLPAPI (275 aa)). GTP-binding positions include 17–24 (AHIDAGKT), 81–85 (DTPGH), and 135–138 (NKMD).

Belongs to the TRAFAC class translation factor GTPase superfamily. Classic translation factor GTPase family. EF-G/EF-2 subfamily.

It is found in the cytoplasm. In terms of biological role, catalyzes the GTP-dependent ribosomal translocation step during translation elongation. During this step, the ribosome changes from the pre-translocational (PRE) to the post-translocational (POST) state as the newly formed A-site-bound peptidyl-tRNA and P-site-bound deacylated tRNA move to the P and E sites, respectively. Catalyzes the coordinated movement of the two tRNA molecules, the mRNA and conformational changes in the ribosome. This chain is Elongation factor G, found in Synechococcus sp. (strain WH7803).